Here is a 481-residue protein sequence, read N- to C-terminus: ATP synthase subunit beta (481 aa).

154–161 (GGAGVGKT) contacts ATP.

Belongs to the ATPase alpha/beta chains family. In terms of assembly, F-type ATPases have 2 components, CF(1) - the catalytic core - and CF(0) - the membrane proton channel. CF(1) has five subunits: alpha(3), beta(3), gamma(1), delta(1), epsilon(1). CF(0) has three main subunits: a(1), b(2) and c(9-12). The alpha and beta chains form an alternating ring which encloses part of the gamma chain. CF(1) is attached to CF(0) by a central stalk formed by the gamma and epsilon chains, while a peripheral stalk is formed by the delta and b chains.

It is found in the cell inner membrane. It carries out the reaction ATP + H2O + 4 H(+)(in) = ADP + phosphate + 5 H(+)(out). Functionally, produces ATP from ADP in the presence of a proton gradient across the membrane. The catalytic sites are hosted primarily by the beta subunits. In Novosphingobium aromaticivorans (strain ATCC 700278 / DSM 12444 / CCUG 56034 / CIP 105152 / NBRC 16084 / F199), this protein is ATP synthase subunit beta.